Reading from the N-terminus, the 37-residue chain is Large ribosomal subunit protein bL36c (37 aa).

The protein belongs to the bacterial ribosomal protein bL36 family.

The protein localises to the plastid. It localises to the chloroplast. The sequence is that of Large ribosomal subunit protein bL36c from Liriodendron tulipifera (Tuliptree).